Consider the following 661-residue polypeptide: Fusaric acid cluster transcription factor FUB12 (661 aa).

Positions C17–C48 form a DNA-binding region, zn(2)-C6 fungal-type. Disordered regions lie at residues T57–G131 and S151–D184. The segment covering P73–S98 has biased composition (polar residues). A compositionally biased stretch (basic and acidic residues) spans S99 to H109. Polar residues predominate over residues A110 to N119. Residues D120–P129 show a composition bias toward basic and acidic residues.

It localises to the nucleus. Its function is as follows. Efflux pump involved in export of biosynthesis of fusaric acid, a mycotoxin with low to moderate toxicity to animals and humans, but with high phytotoxic properties. Constitutes a self-protecting mechanism of the fungus against critical levels of FSA within the cell. This Fusarium oxysporum f. sp. lycopersici (strain 4287 / CBS 123668 / FGSC 9935 / NRRL 34936) (Fusarium vascular wilt of tomato) protein is Fusaric acid cluster transcription factor FUB12.